The sequence spans 218 residues: Redox-sensing transcriptional repressor Rex (218 aa).

Residues 25–64 (WYLSYVQLLHADGCESVSSTRIARAVGVDASLVAKDLSYV) constitute a DNA-binding region (H-T-H motif). Residue 99-104 (GVGSLG) coordinates NAD(+).

This sequence belongs to the transcriptional regulatory Rex family. Homodimer.

The protein resides in the cytoplasm. Its function is as follows. Modulates transcription in response to changes in cellular NADH/NAD(+) redox state. This is Redox-sensing transcriptional repressor Rex from Porphyromonas gingivalis (strain ATCC 33277 / DSM 20709 / CIP 103683 / JCM 12257 / NCTC 11834 / 2561).